The sequence spans 313 residues: Porphobilinogen deaminase (313 aa).

Cys242 is subject to S-(dipyrrolylmethanemethyl)cysteine.

Belongs to the HMBS family. In terms of assembly, monomer. Requires dipyrromethane as cofactor.

It catalyses the reaction 4 porphobilinogen + H2O = hydroxymethylbilane + 4 NH4(+). The protein operates within porphyrin-containing compound metabolism; protoporphyrin-IX biosynthesis; coproporphyrinogen-III from 5-aminolevulinate: step 2/4. Tetrapolymerization of the monopyrrole PBG into the hydroxymethylbilane pre-uroporphyrinogen in several discrete steps. The sequence is that of Porphobilinogen deaminase from Erwinia tasmaniensis (strain DSM 17950 / CFBP 7177 / CIP 109463 / NCPPB 4357 / Et1/99).